The sequence spans 273 residues: Ribosomal RNA small subunit methyltransferase A (273 aa).

Positions 18, 20, 45, 66, 91, and 113 each coordinate S-adenosyl-L-methionine.

Belongs to the class I-like SAM-binding methyltransferase superfamily. rRNA adenine N(6)-methyltransferase family. RsmA subfamily.

It is found in the cytoplasm. The catalysed reaction is adenosine(1518)/adenosine(1519) in 16S rRNA + 4 S-adenosyl-L-methionine = N(6)-dimethyladenosine(1518)/N(6)-dimethyladenosine(1519) in 16S rRNA + 4 S-adenosyl-L-homocysteine + 4 H(+). Specifically dimethylates two adjacent adenosines (A1518 and A1519) in the loop of a conserved hairpin near the 3'-end of 16S rRNA in the 30S particle. May play a critical role in biogenesis of 30S subunits. This chain is Ribosomal RNA small subunit methyltransferase A, found in Salmonella schwarzengrund (strain CVM19633).